A 113-amino-acid polypeptide reads, in one-letter code: T cell receptor alpha variable 8-6 (113 aa).

The signal sequence occupies residues 1 to 20; that stretch reads MLLLLVPAFQVIFTLGGTRA. In terms of domain architecture, Ig-like spans 21 to 113; sequence QSVTQLDSQV…DTAEYFCAVS (93 aa). Cysteines 42 and 110 form a disulfide. Asn43 and Asn87 each carry an N-linked (GlcNAc...) asparagine glycan.

As to quaternary structure, alpha-beta TR is a heterodimer composed of an alpha and beta chain; disulfide-linked. The alpha-beta TR is associated with the transmembrane signaling CD3 coreceptor proteins to form the TR-CD3 (TcR or TCR). The assembly of alpha-beta TR heterodimers with CD3 occurs in the endoplasmic reticulum where a single alpha-beta TR heterodimer associates with one CD3D-CD3E heterodimer, one CD3G-CD3E heterodimer and one CD247 homodimer forming a stable octameric structure. CD3D-CD3E and CD3G-CD3E heterodimers preferentially associate with TR alpha and TR beta chains, respectively. The association of the CD247 homodimer is the last step of TcR assembly in the endoplasmic reticulum and is required for transport to the cell surface.

The protein localises to the cell membrane. Functionally, v region of the variable domain of T cell receptor (TR) alpha chain that participates in the antigen recognition. Alpha-beta T cell receptors are antigen specific receptors which are essential to the immune response and are present on the cell surface of T lymphocytes. Recognize peptide-major histocompatibility (MH) (pMH) complexes that are displayed by antigen presenting cells (APC), a prerequisite for efficient T cell adaptive immunity against pathogens. Binding of alpha-beta TR to pMH complex initiates TR-CD3 clustering on the cell surface and intracellular activation of LCK that phosphorylates the ITAM motifs of CD3G, CD3D, CD3E and CD247 enabling the recruitment of ZAP70. In turn ZAP70 phosphorylates LAT, which recruits numerous signaling molecules to form the LAT signalosome. The LAT signalosome propagates signal branching to three major signaling pathways, the calcium, the mitogen-activated protein kinase (MAPK) kinase and the nuclear factor NF-kappa-B (NF-kB) pathways, leading to the mobilization of transcription factors that are critical for gene expression and essential for T cell growth and differentiation. The T cell repertoire is generated in the thymus, by V-(D)-J rearrangement. This repertoire is then shaped by intrathymic selection events to generate a peripheral T cell pool of self-MH restricted, non-autoaggressive T cells. Post-thymic interaction of alpha-beta TR with the pMH complexes shapes TR structural and functional avidity. The sequence is that of T cell receptor alpha variable 8-6 from Homo sapiens (Human).